The chain runs to 263 residues: Tryptophan synthase alpha chain (263 aa).

Residues glutamate 49 and aspartate 60 each act as proton acceptor in the active site.

Belongs to the TrpA family. Tetramer of two alpha and two beta chains.

The catalysed reaction is (1S,2R)-1-C-(indol-3-yl)glycerol 3-phosphate + L-serine = D-glyceraldehyde 3-phosphate + L-tryptophan + H2O. Its pathway is amino-acid biosynthesis; L-tryptophan biosynthesis; L-tryptophan from chorismate: step 5/5. The alpha subunit is responsible for the aldol cleavage of indoleglycerol phosphate to indole and glyceraldehyde 3-phosphate. The chain is Tryptophan synthase alpha chain from Cereibacter sphaeroides (strain KD131 / KCTC 12085) (Rhodobacter sphaeroides).